A 289-amino-acid chain; its full sequence is 4-hydroxy-tetrahydrodipicolinate synthase (289 aa).

Thr-42 contributes to the pyruvate binding site. Tyr-129 acts as the Proton donor/acceptor in catalysis. Lys-157 acts as the Schiff-base intermediate with substrate in catalysis. Ile-198 serves as a coordination point for pyruvate.

This sequence belongs to the DapA family. As to quaternary structure, homotetramer; dimer of dimers.

It is found in the cytoplasm. The catalysed reaction is L-aspartate 4-semialdehyde + pyruvate = (2S,4S)-4-hydroxy-2,3,4,5-tetrahydrodipicolinate + H2O + H(+). Its pathway is amino-acid biosynthesis; L-lysine biosynthesis via DAP pathway; (S)-tetrahydrodipicolinate from L-aspartate: step 3/4. Functionally, catalyzes the condensation of (S)-aspartate-beta-semialdehyde [(S)-ASA] and pyruvate to 4-hydroxy-tetrahydrodipicolinate (HTPA). The polypeptide is 4-hydroxy-tetrahydrodipicolinate synthase (Chlamydia caviae (strain ATCC VR-813 / DSM 19441 / 03DC25 / GPIC) (Chlamydophila caviae)).